Reading from the N-terminus, the 236-residue chain is 2-C-methyl-D-erythritol 4-phosphate cytidylyltransferase (236 aa).

This sequence belongs to the IspD/TarI cytidylyltransferase family. IspD subfamily. As to quaternary structure, homodimer.

It carries out the reaction 2-C-methyl-D-erythritol 4-phosphate + CTP + H(+) = 4-CDP-2-C-methyl-D-erythritol + diphosphate. It participates in isoprenoid biosynthesis; isopentenyl diphosphate biosynthesis via DXP pathway; isopentenyl diphosphate from 1-deoxy-D-xylulose 5-phosphate: step 2/6. In terms of biological role, catalyzes the formation of 4-diphosphocytidyl-2-C-methyl-D-erythritol from CTP and 2-C-methyl-D-erythritol 4-phosphate (MEP). The protein is 2-C-methyl-D-erythritol 4-phosphate cytidylyltransferase of Salmonella paratyphi C (strain RKS4594).